Here is a 205-residue protein sequence, read N- to C-terminus: Ribosomal RNA small subunit methyltransferase G 1 (205 aa).

S-adenosyl-L-methionine is bound by residues Gly-77, Leu-82, 100–102, 129–130, and Arg-138; these read EKS and LE.

The protein belongs to the methyltransferase superfamily. RNA methyltransferase RsmG family.

It localises to the cytoplasm. The catalysed reaction is guanosine(527) in 16S rRNA + S-adenosyl-L-methionine = N(7)-methylguanosine(527) in 16S rRNA + S-adenosyl-L-homocysteine. Its function is as follows. Specifically methylates the N7 position of guanine in position 527 of 16S rRNA. This Bdellovibrio bacteriovorus (strain ATCC 15356 / DSM 50701 / NCIMB 9529 / HD100) protein is Ribosomal RNA small subunit methyltransferase G 1.